The chain runs to 179 residues: Protein GrpE (179 aa).

This sequence belongs to the GrpE family. In terms of assembly, homodimer.

Its subcellular location is the cytoplasm. In terms of biological role, participates actively in the response to hyperosmotic and heat shock by preventing the aggregation of stress-denatured proteins, in association with DnaK and GrpE. It is the nucleotide exchange factor for DnaK and may function as a thermosensor. Unfolded proteins bind initially to DnaJ; upon interaction with the DnaJ-bound protein, DnaK hydrolyzes its bound ATP, resulting in the formation of a stable complex. GrpE releases ADP from DnaK; ATP binding to DnaK triggers the release of the substrate protein, thus completing the reaction cycle. Several rounds of ATP-dependent interactions between DnaJ, DnaK and GrpE are required for fully efficient folding. The polypeptide is Protein GrpE (Rickettsia felis (strain ATCC VR-1525 / URRWXCal2) (Rickettsia azadi)).